The chain runs to 100 residues: Aspartyl/glutamyl-tRNA(Asn/Gln) amidotransferase subunit C (100 aa).

Belongs to the GatC family. As to quaternary structure, heterotrimer of A, B and C subunits.

The catalysed reaction is L-glutamyl-tRNA(Gln) + L-glutamine + ATP + H2O = L-glutaminyl-tRNA(Gln) + L-glutamate + ADP + phosphate + H(+). It catalyses the reaction L-aspartyl-tRNA(Asn) + L-glutamine + ATP + H2O = L-asparaginyl-tRNA(Asn) + L-glutamate + ADP + phosphate + 2 H(+). Allows the formation of correctly charged Asn-tRNA(Asn) or Gln-tRNA(Gln) through the transamidation of misacylated Asp-tRNA(Asn) or Glu-tRNA(Gln) in organisms which lack either or both of asparaginyl-tRNA or glutaminyl-tRNA synthetases. The reaction takes place in the presence of glutamine and ATP through an activated phospho-Asp-tRNA(Asn) or phospho-Glu-tRNA(Gln). This Streptococcus pyogenes serotype M18 (strain MGAS8232) protein is Aspartyl/glutamyl-tRNA(Asn/Gln) amidotransferase subunit C.